Consider the following 363-residue polypeptide: Histidinol-phosphate aminotransferase (363 aa).

K220 carries the N6-(pyridoxal phosphate)lysine modification.

The protein belongs to the class-II pyridoxal-phosphate-dependent aminotransferase family. Histidinol-phosphate aminotransferase subfamily. Homodimer. It depends on pyridoxal 5'-phosphate as a cofactor.

It carries out the reaction L-histidinol phosphate + 2-oxoglutarate = 3-(imidazol-4-yl)-2-oxopropyl phosphate + L-glutamate. Its pathway is amino-acid biosynthesis; L-histidine biosynthesis; L-histidine from 5-phospho-alpha-D-ribose 1-diphosphate: step 7/9. This Paramagnetospirillum magneticum (strain ATCC 700264 / AMB-1) (Magnetospirillum magneticum) protein is Histidinol-phosphate aminotransferase.